The sequence spans 234 residues: Demethylmenaquinone methyltransferase (234 aa).

Residues T58, D79, and 106 to 107 (NA) contribute to the S-adenosyl-L-methionine site.

The protein belongs to the class I-like SAM-binding methyltransferase superfamily. MenG/UbiE family.

The catalysed reaction is a 2-demethylmenaquinol + S-adenosyl-L-methionine = a menaquinol + S-adenosyl-L-homocysteine + H(+). Its pathway is quinol/quinone metabolism; menaquinone biosynthesis; menaquinol from 1,4-dihydroxy-2-naphthoate: step 2/2. Its function is as follows. Methyltransferase required for the conversion of demethylmenaquinol (DMKH2) to menaquinol (MKH2). The sequence is that of Demethylmenaquinone methyltransferase from Bacillus pumilus (strain SAFR-032).